The chain runs to 294 residues: Small ribosomal subunit protein uS3 (294 aa).

One can recognise a KH type-2 domain in the interval 39–107 (VREYLKTKLK…PVAVNIEEVR (69 aa)). Positions 210–294 (RNDLPAVETP…AAPAADVKGE (85 aa)) are disordered. Residues 219–238 (PRPDEERRPRGPRRDGRPGG) show a composition bias toward basic and acidic residues. Low complexity-rich tracts occupy residues 249 to 258 (RPAAGNSAPA) and 281 to 294 (VAAP…VKGE).

The protein belongs to the universal ribosomal protein uS3 family. In terms of assembly, part of the 30S ribosomal subunit. Forms a tight complex with proteins S10 and S14.

Its function is as follows. Binds the lower part of the 30S subunit head. Binds mRNA in the 70S ribosome, positioning it for translation. This chain is Small ribosomal subunit protein uS3, found in Verminephrobacter eiseniae (strain EF01-2).